Here is a 291-residue protein sequence, read N- to C-terminus: tRNA dimethylallyltransferase (291 aa).

Residue 9-16 (GPTASGKT) participates in ATP binding. Substrate is bound at residue 11-16 (TASGKT). The interval 34–37 (DSLQ) is interaction with substrate tRNA.

The protein belongs to the IPP transferase family. As to quaternary structure, monomer. Requires Mg(2+) as cofactor.

The catalysed reaction is adenosine(37) in tRNA + dimethylallyl diphosphate = N(6)-dimethylallyladenosine(37) in tRNA + diphosphate. Catalyzes the transfer of a dimethylallyl group onto the adenine at position 37 in tRNAs that read codons beginning with uridine, leading to the formation of N6-(dimethylallyl)adenosine (i(6)A). The protein is tRNA dimethylallyltransferase of Aster yellows witches'-broom phytoplasma (strain AYWB).